The primary structure comprises 366 residues: Chorismate synthase (366 aa).

NADP(+) contacts are provided by R48 and R54. FMN-binding positions include 125–127 (RSS), 238–239 (NA), G278, 293–297 (KPTSS), and R319.

Belongs to the chorismate synthase family. Homotetramer. FMNH2 is required as a cofactor.

It carries out the reaction 5-O-(1-carboxyvinyl)-3-phosphoshikimate = chorismate + phosphate. It participates in metabolic intermediate biosynthesis; chorismate biosynthesis; chorismate from D-erythrose 4-phosphate and phosphoenolpyruvate: step 7/7. Catalyzes the anti-1,4-elimination of the C-3 phosphate and the C-6 proR hydrogen from 5-enolpyruvylshikimate-3-phosphate (EPSP) to yield chorismate, which is the branch point compound that serves as the starting substrate for the three terminal pathways of aromatic amino acid biosynthesis. This reaction introduces a second double bond into the aromatic ring system. In Burkholderia cenocepacia (strain HI2424), this protein is Chorismate synthase.